A 398-amino-acid polypeptide reads, in one-letter code: Cysteine desulfurase (398 aa).

Pyridoxal 5'-phosphate contacts are provided by residues 74 to 75 (GT), Asn155, Gln182, and 202 to 204 (CGH). Lys205 carries the post-translational modification N6-(pyridoxal phosphate)lysine. Over residues 230 to 244 (GHQERSRRAGNGERA) the composition is skewed to basic and acidic residues. The segment at 230 to 253 (GHQERSRRAGNGERAGHRRAGGGA) is disordered. The active-site Cysteine persulfide intermediate is the Cys327. Cys327 lines the [2Fe-2S] cluster pocket.

Belongs to the class-V pyridoxal-phosphate-dependent aminotransferase family. NifS/IscS subfamily. In terms of assembly, homodimer. Pyridoxal 5'-phosphate is required as a cofactor.

It carries out the reaction (sulfur carrier)-H + L-cysteine = (sulfur carrier)-SH + L-alanine. In terms of biological role, catalyzes the removal of elemental sulfur atoms from cysteine to produce alanine. Seems to participate in the biosynthesis of the nitrogenase metalloclusters by providing the inorganic sulfur required for the Fe-S core formation. This chain is Cysteine desulfurase, found in Azospirillum brasilense.